A 204-amino-acid chain; its full sequence is ATP-dependent Clp protease proteolytic subunit (204 aa).

Ser-100 acts as the Nucleophile in catalysis. His-125 is an active-site residue.

It belongs to the peptidase S14 family. As to quaternary structure, fourteen ClpP subunits assemble into 2 heptameric rings which stack back to back to give a disk-like structure with a central cavity, resembling the structure of eukaryotic proteasomes.

It is found in the cytoplasm. It carries out the reaction Hydrolysis of proteins to small peptides in the presence of ATP and magnesium. alpha-casein is the usual test substrate. In the absence of ATP, only oligopeptides shorter than five residues are hydrolyzed (such as succinyl-Leu-Tyr-|-NHMec, and Leu-Tyr-Leu-|-Tyr-Trp, in which cleavage of the -Tyr-|-Leu- and -Tyr-|-Trp bonds also occurs).. Functionally, cleaves peptides in various proteins in a process that requires ATP hydrolysis. Has a chymotrypsin-like activity. Plays a major role in the degradation of misfolded proteins. The sequence is that of ATP-dependent Clp protease proteolytic subunit from Anaeromyxobacter sp. (strain Fw109-5).